Reading from the N-terminus, the 122-residue chain is Large ribosomal subunit protein uL14 (122 aa).

It belongs to the universal ribosomal protein uL14 family. In terms of assembly, part of the 50S ribosomal subunit. Forms a cluster with proteins L3 and L19. In the 70S ribosome, L14 and L19 interact and together make contacts with the 16S rRNA in bridges B5 and B8.

Functionally, binds to 23S rRNA. Forms part of two intersubunit bridges in the 70S ribosome. The sequence is that of Large ribosomal subunit protein uL14 from Petrotoga mobilis (strain DSM 10674 / SJ95).